Reading from the N-terminus, the 289-residue chain is BTB/POZ domain-containing protein KCTD7 (289 aa).

The disordered stretch occupies residues 1 to 40; sequence MVVVTGREPDSRRPDGAMSSSDAEDDFLEPATPTATQAGH. Positions 53–141 constitute a BTB domain; it reads VPLNIGGAHF…YAIGPLLEQL (89 aa).

Interacts with CUL3.

The protein localises to the cell membrane. Its subcellular location is the cytoplasm. The protein resides in the cytosol. Its function is as follows. May be involved in the control of excitability of cortical neurons. This Bos taurus (Bovine) protein is BTB/POZ domain-containing protein KCTD7 (KCTD7).